Reading from the N-terminus, the 258-residue chain is uncharacterized protein (258 aa).

The next 6 membrane-spanning stretches (helical) occupy residues 24 to 44 (IPLF…VNIF), 70 to 90 (PLVH…FLLM), 100 to 120 (LCTI…AYLI), 130 to 150 (VYVG…LNLF), 157 to 177 (LLNL…VLGL), and 181 to 201 (FSIT…FSFA). Histidine 188 is an active-site residue.

Belongs to the peptidase S54 family.

It is found in the golgi apparatus membrane. This is an uncharacterized protein from Schizosaccharomyces pombe (strain 972 / ATCC 24843) (Fission yeast).